Here is a 65-residue protein sequence, read N- to C-terminus: Large ribosomal subunit protein bL35 (65 aa).

The protein belongs to the bacterial ribosomal protein bL35 family.

This is Large ribosomal subunit protein bL35 from Burkholderia ambifaria (strain MC40-6).